Reading from the N-terminus, the 122-residue chain is Large ribosomal subunit protein uL18 (122 aa).

This sequence belongs to the universal ribosomal protein uL18 family. Part of the 50S ribosomal subunit; part of the 5S rRNA/L5/L18/L25 subcomplex. Contacts the 5S and 23S rRNAs.

This is one of the proteins that bind and probably mediate the attachment of the 5S RNA into the large ribosomal subunit, where it forms part of the central protuberance. This is Large ribosomal subunit protein uL18 from Kosmotoga olearia (strain ATCC BAA-1733 / DSM 21960 / TBF 19.5.1).